Here is a 146-residue protein sequence, read N- to C-terminus: Small ribosomal subunit protein bS16 (146 aa).

The segment covering 84–102 (SHLEAQKAAVERLGRRKDY) has biased composition (basic and acidic residues). Residues 84–146 (SHLEAQKAAV…DAPAAEATTE (63 aa)) form a disordered region. Over residues 110–119 (APKAAPVAEA) the composition is skewed to low complexity. Positions 120–130 (PAEEAPAEEPA) are enriched in acidic residues. The segment covering 131–146 (AEASTDDAPAAEATTE) has biased composition (low complexity).

Belongs to the bacterial ribosomal protein bS16 family.

In Rhodopirellula baltica (strain DSM 10527 / NCIMB 13988 / SH1), this protein is Small ribosomal subunit protein bS16.